The primary structure comprises 228 residues: MQKLKQQVFDANMDLPRYGLVTFTWGNVSAIDRERGLVVIKPSGVAYETMKVDDMVVVDMDGKVVEGGYRPSSDTATHLALYQRYPSLGGVVHTHSTHATAWAQAGMAIPALGTTHADYFFGDIPCTRALSEEEVQGEYELNTGKVIIETLGEVEPLHTPGIVVYQHGPFAWGKDAHDAVHNAVVMEEVAKMAWIARGINPALNPIDDYLMNKHFMRKHGPNAYYGQK.

Residues 26 to 27, 43 to 44, and 72 to 73 each bind substrate; these read GN, SG, and SS. Zn(2+) contacts are provided by Asp-74, His-93, and His-95. Catalysis depends on Asp-118, which acts as the Proton donor/acceptor. Residue His-167 coordinates Zn(2+). Tyr-225 acts as the Proton donor/acceptor in catalysis.

The protein belongs to the aldolase class II family. AraD/FucA subfamily. The cofactor is Zn(2+).

It catalyses the reaction L-ribulose 5-phosphate = D-xylulose 5-phosphate. It participates in cofactor degradation; L-ascorbate degradation; D-xylulose 5-phosphate from L-ascorbate: step 4/4. Its function is as follows. Catalyzes the isomerization of L-ribulose 5-phosphate to D-xylulose 5-phosphate. Is involved in the anaerobic L-ascorbate utilization. This is L-ribulose-5-phosphate 4-epimerase UlaF from Salmonella choleraesuis (strain SC-B67).